We begin with the raw amino-acid sequence, 416 residues long: Transmembrane protease serine 11B-like protein (416 aa).

At 1 to 15 (MYRPVIASRKSIPPW) the chain is on the cytoplasmic side. The chain crosses the membrane as a helical; Signal-anchor for type II membrane protein span at residues 16-36 (LIILCVLGVLAALGIIIGLLV). Residues 37 to 416 (HFLAVENKIY…RNWIASKTGI (380 aa)) lie on the Extracellular side of the membrane. One can recognise an SEA domain in the interval 44–161 (KIYYYQGGFK…GSLKLTEISK (118 aa)). Asn-107 is a glycosylation site (N-linked (GlcNAc...) asparagine). Residues 185 to 415 (ITGGSTAHKG…YRNWIASKTG (231 aa)) enclose the Peptidase S1 domain. Cys-210 and Cys-226 are joined by a disulfide. The active-site Charge relay system is the His-225. An N-linked (GlcNAc...) asparagine glycan is attached at Asn-235. Asp-270 acts as the Charge relay system in catalysis. 2 disulfide bridges follow: Cys-335–Cys-351 and Cys-362–Cys-391. The Charge relay system role is filled by Ser-366.

The protein belongs to the peptidase S1 family. In terms of tissue distribution, expressed in esophagus, cervix, tongue, and testes.

The protein localises to the cell membrane. Inhibited by aprotinin, leupeptin, benzamidine, SERPINA1, SPINT1 and SPINT2. Serine protease. The sequence is that of Transmembrane protease serine 11B-like protein (Tmprss11b) from Mus musculus (Mouse).